Reading from the N-terminus, the 335-residue chain is DNA-directed RNA polymerase subunit alpha (335 aa).

The tract at residues 1-231 is alpha N-terminal domain (alpha-NTD); that stretch reads MVREKITVST…DLLIPFLHTK (231 aa). The segment at 263–335 is alpha C-terminal domain (alpha-CTD); that stretch reads KKMALKSIFI…FVIDLPKNKF (73 aa).

Belongs to the RNA polymerase alpha chain family. In plastids the minimal PEP RNA polymerase catalytic core is composed of four subunits: alpha, beta, beta', and beta''. When a (nuclear-encoded) sigma factor is associated with the core the holoenzyme is formed, which can initiate transcription.

The protein resides in the plastid. It localises to the chloroplast. It carries out the reaction RNA(n) + a ribonucleoside 5'-triphosphate = RNA(n+1) + diphosphate. In terms of biological role, DNA-dependent RNA polymerase catalyzes the transcription of DNA into RNA using the four ribonucleoside triphosphates as substrates. This is DNA-directed RNA polymerase subunit alpha from Lactuca sativa (Garden lettuce).